Here is a 117-residue protein sequence, read N- to C-terminus: Probable non-functional T cell receptor gamma variable (117 aa).

Positions 1 to 20 (MRWALAVLLAFLSPASQISS) are cleaved as a signal peptide. One can recognise an Ig-like domain in the interval 21 to 117 (NLEGRTKSVT…GFYYCATWDR (97 aa)). An intrachain disulfide couples cysteine 41 to cysteine 112. A glycan (N-linked (GlcNAc...) asparagine) is linked at asparagine 105.

As to quaternary structure, gamma-delta TR is a heterodimer composed of a gamma and delta chain; disulfide-linked. The gamma-delta TR is associated with the transmembrane signaling CD3 coreceptor proteins following the stoichiometry: a single gamma-delta TR heterodimer associates with one CD3D-CD3E heterodimer, one CD3G-CD3E heterodimer and one CD247 homodimer forming a stable octameric structure. Upon activation, gamma-delta TR complex associates with FCER1G to initiate intracellular signaling.

Its subcellular location is the cell membrane. Its function is as follows. Probable non-functional open reading frame (ORF) of V region of the variable domain of T cell receptor (TR) gamma chain. Non-functional ORF generally cannot participate in the synthesis of a productive T cell receptor (TR) chain due to altered V-(D)-J or switch recombination and/or splicing site (at mRNA level) and/or conserved amino acid change (protein level). Gamma-delta TRs recognize a variety of self and foreign non-peptide antigens frequently expressed at the epithelial boundaries between the host and external environment, including endogenous lipids presented by MH-like protein CD1D and phosphoantigens presented by butyrophilin-like molecule BTN3A1. Upon antigen recognition induces rapid, innate-like immune responses involved in pathogen clearance and tissue repair. Binding of gamma-delta TR complex to antigen triggers phosphorylation of immunoreceptor tyrosine-based activation motifs (ITAMs) in the CD3 chains by the LCK and FYN kinases, allowing the recruitment, phosphorylation, and activation of ZAP70 that facilitates phosphorylation of the scaffolding proteins LCP2 and LAT. This lead to the formation of a supramolecular signalosome that recruits the phospholipase PLCG1, resulting in calcium mobilization and ERK activation, ultimately leading to T cell expansion and differentiation into effector cells. Gamma-delta TRs are produced through somatic rearrangement of a limited repertoire of variable (V), diversity (D), and joining (J) genes. The potential diversity of gamma-delta TRs is conferred by the unique ability to rearrange (D) genes in tandem and to utilize all three reading frames. The combinatorial diversity is considerably increased by the sequence exonuclease trimming and random nucleotide (N) region additions which occur during the V-(D)-J rearrangements. This Homo sapiens (Human) protein is Probable non-functional T cell receptor gamma variable.